A 145-amino-acid chain; its full sequence is Large ribosomal subunit protein uL13 (145 aa).

This sequence belongs to the universal ribosomal protein uL13 family. As to quaternary structure, part of the 50S ribosomal subunit.

This protein is one of the early assembly proteins of the 50S ribosomal subunit, although it is not seen to bind rRNA by itself. It is important during the early stages of 50S assembly. This Bacillus velezensis (strain DSM 23117 / BGSC 10A6 / LMG 26770 / FZB42) (Bacillus amyloliquefaciens subsp. plantarum) protein is Large ribosomal subunit protein uL13.